A 314-amino-acid polypeptide reads, in one-letter code: uncharacterized protein (314 aa).

The interval 1-71 is disordered; sequence MAGNSQRRGA…QRAGRKADET (71 aa). G266, I286, and L295 together coordinate S-adenosyl-L-methionine.

It belongs to the class IV-like SAM-binding methyltransferase superfamily. RNA methyltransferase TrmH family.

This is an uncharacterized protein from Mycolicibacterium smegmatis (strain ATCC 700084 / mc(2)155) (Mycobacterium smegmatis).